The following is a 151-amino-acid chain: Ribosome maturation factor RimP (151 aa).

It belongs to the RimP family.

Its subcellular location is the cytoplasm. Required for maturation of 30S ribosomal subunits. The sequence is that of Ribosome maturation factor RimP from Alcanivorax borkumensis (strain ATCC 700651 / DSM 11573 / NCIMB 13689 / SK2).